The chain runs to 78 residues: Large ribosomal subunit protein bL28 (78 aa).

The tract at residues 1–20 (MSRVCQVTGKRPVTGNNRSH) is disordered.

It belongs to the bacterial ribosomal protein bL28 family.

The sequence is that of Large ribosomal subunit protein bL28 from Vibrio campbellii (strain ATCC BAA-1116).